Consider the following 338-residue polypeptide: Tryptophan--tRNA ligase (338 aa).

ATP-binding positions include 11–13 and 19–20; these read QPS and GN. The 'HIGH' region signature appears at 12–20; that stretch reads PSGELSIGN. Position 135 (Asp135) interacts with L-tryptophan. ATP contacts are provided by residues 147 to 149, Val189, and 198 to 202; these read GSD and KMSKS. The 'KMSKS' region signature appears at 198-202; it reads KMSKS.

This sequence belongs to the class-I aminoacyl-tRNA synthetase family. As to quaternary structure, homodimer.

It is found in the cytoplasm. The catalysed reaction is tRNA(Trp) + L-tryptophan + ATP = L-tryptophyl-tRNA(Trp) + AMP + diphosphate + H(+). Its function is as follows. Catalyzes the attachment of tryptophan to tRNA(Trp). This is Tryptophan--tRNA ligase from Vibrio vulnificus (strain CMCP6).